A 1230-amino-acid polypeptide reads, in one-letter code: Protein transport protein Sec31A (1230 aa).

7 WD repeats span residues 4 to 47 (KEID…EIFE), 64 to 111 (SSSH…AGDK), 120 to 160 (KHTG…TPMT), 166 to 206 (QPPE…PIIK), 209 to 254 (DHSN…SPLR), 258 to 298 (NHAR…VLYE), and 301 to 342 (TNTQ…DGLR). Residues 161–470 (PGAKTQPPED…IEASQTEFEK (310 aa)) form an interaction with SEC13 region. One copy of the WD 8; interaction with SEC13 repeat lies at 397-429 (SFSFGGKLVTFESVAVPLQQGAEQQRRQPVFIS). An Asymmetric dimethylarginine modification is found at arginine 423. 2 positions are modified to phosphoserine: serine 526 and serine 531. Lysine 646 participates in a covalent cross-link: Glycyl lysine isopeptide (Lys-Gly) (interchain with G-Cter in ubiquitin). Disordered stretches follow at residues 789–905 (QGKP…ASNA) and 924–1104 (MYTA…PIGN). The residue at position 798 (serine 798) is a Phosphoserine. Residues 799 to 1123 (SQSPYERQPL…TEKITKKPIP (325 aa)) are interaction with PDCD6. Residues 841–847 (GFIMQGN) carry the ALG-2-binding site motif-2 (ABS-2) motif. A compositionally biased stretch (pro residues) spans 866–876 (QLPPYPQPQPY). Composition is skewed to low complexity over residues 930–940 (ASSPTSSSAAS) and 959–975 (PSSSAYALPPGTTGTPP). Polar residues-rich tracts occupy residues 981–995 (PASQRTENQSFQDQA) and 1033–1064 (PIMNPSGDPQSQGLQQQPSTPGPLSSHASFPQ). Threonine 1171 carries the post-translational modification Phosphothreonine. Position 1173 is a phosphoserine (serine 1173). Lysine 1227 participates in a covalent cross-link: Glycyl lysine isopeptide (Lys-Gly) (interchain with G-Cter in ubiquitin).

The protein belongs to the WD repeat SEC31 family. As to quaternary structure, COPII is composed of at least 5 proteins: the SEC23/24 complex, the SEC13/31 complex and SAR1. SEC13 and SEC31 make a 2:2 tetramer that forms the edge element of the COPII outer coat. The tetramer self-assembles in multiple copies to form the complete polyhedral cage. Interacts (via WD 8) with SEC13. Interacts with PDCD6; interaction takes place in response to cytosolic calcium increase and leads to bridge together the BCR(KLHL12) complex and SEC31A, leading to monoubiquitination. Interacts with KLHL12. Post-translationally, monoubiquitinated by the BCR(KLHL12) E3 ubiquitin ligase complex, leading to regulate the size of COPII coats.

The protein localises to the cytoplasm. It localises to the cytoplasmic vesicle. The protein resides in the COPII-coated vesicle membrane. Its subcellular location is the endoplasmic reticulum membrane. Functionally, component of the coat protein complex II (COPII) which promotes the formation of transport vesicles from the endoplasmic reticulum (ER). The coat has two main functions, the physical deformation of the endoplasmic reticulum membrane into vesicles and the selection of cargo molecules. This is Protein transport protein Sec31A (Sec31a) from Mus musculus (Mouse).